The primary structure comprises 650 residues: SUMO-activating enzyme subunit 2 (650 aa).

Residues 25-30 (GAGGIG), D49, 57-60 (NLNR), K73, 96-97 (SI), and 118-123 (DNRAAR) contribute to the ATP site. Zn(2+)-binding residues include C159 and C162. The active-site Glycyl thioester intermediate is C174. Residue K191 forms a Glycyl lysine isopeptide (Lys-Gly) (interchain with G-Cter in SUMO) linkage. A Glycyl lysine isopeptide (Lys-Gly) (interchain with G-Cter in SUMO1) cross-link involves residue K237. Residues K258, K282, and K286 each participate in a glycyl lysine isopeptide (Lys-Gly) (interchain with G-Cter in SUMO) cross-link. 2 residues coordinate Zn(2+): C446 and C449. Residues 554–650 (DAPDKAPAPS…DDDEDIIALD (97 aa)) are disordered. Residues 572 to 586 (ANGNKDSAQPSTSSK) are compositionally biased toward polar residues. Acidic residues predominate over residues 590–603 (EDDDVLLVDSDEEP). The residue at position 599 (S599) is a Phosphoserine. Residues K618 and K630 each participate in a glycyl lysine isopeptide (Lys-Gly) (interchain with G-Cter in SUMO) cross-link. Over residues 638-650 (PADDDDEDIIALD) the composition is skewed to acidic residues.

The protein belongs to the ubiquitin-activating E1 family. Heterodimer of sae1 and uba2/sae2. The heterodimer corresponds to the two domains that are encoded on a single polypeptide chain in ubiquitin-activating enzyme E1. Interacts with ube2i. In terms of processing, sumoylated with SUMO1 and SUMO2/3 and by UBC9. Sumoylation at Lys-237 inhibits enzymatic activity. Sumoylation at the C-terminal lysine cluster plays an essential role in nuclear trafficking. In terms of tissue distribution, expressed in eye, brain and pectoral fins.

It localises to the cytoplasm. It is found in the nucleus. It functions in the pathway protein modification; protein sumoylation. The heterodimer acts as an E1 ligase for sumo1, sumo2, and sumo3. It mediates ATP-dependent activation of sumo proteins followed by formation of a thioester bond between a sumo protein and a conserved active site cysteine residue on uba2/sae2. In Danio rerio (Zebrafish), this protein is SUMO-activating enzyme subunit 2 (uba2).